Here is a 120-residue protein sequence, read N- to C-terminus: MVGLSRLADGGLLLVLALLPLALDGKPAPLEKAPMAPARIIPYLRPVGKESRAALDRMVPPEDGDSRRLEGLAKEALGEGCFGNRIDRIGDVSGMGCNRRTPAPKAPLRILPYLRPIRKE.

Residues 1-25 form the signal peptide; the sequence is MVGLSRLADGGLLLVLALLPLALDG. A propeptide spanning residues 26–70 is cleaved from the precursor; it reads KPAPLEKAPMAPARIIPYLRPVGKESRAALDRMVPPEDGDSRRLE. Residues Cys-81 and Cys-97 are joined by a disulfide bond. Residues 110-120 constitute a propeptide that is removed on maturation; it reads ILPYLRPIRKE.

The protein belongs to the natriuretic peptide family. As to expression, expressed by the venom gland.

The protein localises to the secreted. In terms of biological role, natriuretic peptide that dose-dependently induces the rapid relaxation of rat aortic strips phenylephrine-precontracted. Acts by stimulating cGMP production in a dose-dependent manner (by probably activating NPR1 and/or NPR2). May also show potent hypotensive effects. This chain is Natriuretic peptide, found in Micrurus altirostris (Uruguayan coral snake).